The chain runs to 393 residues: Inulin fructotransferase [DFA-I-forming] (393 aa).

It catalyses the reaction Produces alpha-D-fructofuranose beta-D-fructofuranose 1,2':2,1'-dianhydride (DFA I) by successively eliminating the diminishing (2-&gt;1)-beta-D-fructan (inulin) chain from the terminal D-fructosyl-D-fructosyl disaccharide.. The chain is Inulin fructotransferase [DFA-I-forming] from Arthrobacter globiformis.